A 130-amino-acid polypeptide reads, in one-letter code: Histone H2B.1 (130 aa).

The span at 1–19 shows a compositional bias: basic and acidic residues; the sequence is MAPKAEKKPASKAPAEKKP. A disordered region spans residues 1-39; it reads MAPKAEKKPASKAPAEKKPAAKKTASATGTKKRSKTRKE. N6-acetyllysine; alternate is present on residues lysine 7 and lysine 8. Glycyl lysine isopeptide (Lys-Gly) (interchain with G-Cter in SUMO); alternate cross-links involve residues lysine 7 and lysine 8. Serine 11 bears the Phosphoserine mark. The residue at position 12 (lysine 12) is an N6-acetyllysine. Lysine 17 bears the N6-acetyllysine; alternate mark. Lysine 17 participates in a covalent cross-link: Glycyl lysine isopeptide (Lys-Gly) (interchain with G-Cter in SUMO); alternate. Lysine 18 participates in a covalent cross-link: Glycyl lysine isopeptide (Lys-Gly) (interchain with G-Cter in SUMO). A Glycyl lysine isopeptide (Lys-Gly) (interchain with G-Cter in ubiquitin) cross-link involves residue lysine 124.

The protein belongs to the histone H2B family. The nucleosome is a histone octamer containing two molecules each of H2A, H2B, H3 and H4 assembled in one H3-H4 heterotetramer and two H2A-H2B heterodimers. The octamer wraps approximately 147 bp of DNA. Monoubiquitinated by the UBC2-BRE1 complex to form H2BK123ub1. H2BK123ub1 gives a specific tag for epigenetic transcriptional activation and is also prerequisite for H3K4me and H3K79me formation. H2BK123ub1 also modulates the formation of double-strand breaks during meiosis and is a prerequisite for DNA-damage checkpoint activation. In terms of processing, phosphorylated by STE20 to form H2BS10ph during progression through meiotic prophase. May be correlated with chromosome condensation. Post-translationally, acetylated by GCN5 to form H2BK11ac and H2BK16ac. H2BK16ac can also be formed by ESA1. Acetylation of N-terminal lysines and particularly formation of H2BK11acK16ac has a positive effect on transcription. Sumoylation to form H2BK6su or H2BK7su, and probably also H2BK16su or H2BK17su, occurs preferentially near the telomeres and represses gene transcription.

Its subcellular location is the nucleus. It is found in the chromosome. Core component of nucleosome. Nucleosomes wrap and compact DNA into chromatin, limiting DNA accessibility to the cellular machineries which require DNA as a template. Histones thereby play a central role in transcription regulation, DNA repair, DNA replication and chromosomal stability. DNA accessibility is regulated via a complex set of post-translational modifications of histones, also called histone code, and nucleosome remodeling. The sequence is that of Histone H2B.1 (HTB1) from Debaryomyces hansenii (strain ATCC 36239 / CBS 767 / BCRC 21394 / JCM 1990 / NBRC 0083 / IGC 2968) (Yeast).